The primary structure comprises 390 residues: Glutamyl-tRNA reductase (390 aa).

Residues 46–49 (TCNR), Ser96, 101–103 (EAQ), and Gln107 contribute to the substrate site. Cys47 acts as the Nucleophile in catalysis. 176-181 (GAGEMA) contributes to the NADP(+) binding site.

This sequence belongs to the glutamyl-tRNA reductase family. As to quaternary structure, homodimer.

It catalyses the reaction (S)-4-amino-5-oxopentanoate + tRNA(Glu) + NADP(+) = L-glutamyl-tRNA(Glu) + NADPH + H(+). It participates in porphyrin-containing compound metabolism; protoporphyrin-IX biosynthesis; 5-aminolevulinate from L-glutamyl-tRNA(Glu): step 1/2. Functionally, catalyzes the NADPH-dependent reduction of glutamyl-tRNA(Glu) to glutamate 1-semialdehyde (GSA). The polypeptide is Glutamyl-tRNA reductase (Thermus thermophilus (strain ATCC BAA-163 / DSM 7039 / HB27)).